Consider the following 104-residue polypeptide: Ribonuclease P protein component 4 (104 aa).

The Zn(2+) site is built by C57, C60, C83, and C86.

Belongs to the eukaryotic/archaeal RNase P protein component 4 family. As to quaternary structure, consists of a catalytic RNA component and at least 4-5 protein subunits. It depends on Zn(2+) as a cofactor.

It is found in the cytoplasm. The enzyme catalyses Endonucleolytic cleavage of RNA, removing 5'-extranucleotides from tRNA precursor.. Its function is as follows. Part of ribonuclease P, a protein complex that generates mature tRNA molecules by cleaving their 5'-ends. The protein is Ribonuclease P protein component 4 of Saccharolobus islandicus (strain M.14.25 / Kamchatka #1) (Sulfolobus islandicus).